A 196-amino-acid polypeptide reads, in one-letter code: uncharacterized protein (196 aa).

In terms of domain architecture, HTH tetR-type spans 7–67; the sequence is RNTKEKILTA…AVIDNHVKIW (61 aa). Residues 30–49 constitute a DNA-binding region (H-T-H motif); that stretch reads SINDILDETATGKGQFYYYF.

This is an uncharacterized protein from Lactococcus lactis subsp. lactis (Streptococcus lactis).